Reading from the N-terminus, the 24-residue chain is Ascaphin-5 (24 aa).

As to expression, expressed by the skin glands.

It is found in the secreted. Functionally, antimicrobial peptide. Synthetic peptide shows higher potency against Gram-negative bacteria than against Gram-positive bacteria. Has a very week hemolytic activity. The protein is Ascaphin-5 of Ascaphus truei (Coastal tailed frog).